The chain runs to 230 residues: Antiholin-like protein LrgB (230 aa).

7 consecutive transmembrane segments (helical) span residues 5–25 (MTPYFGIVVSLIAYGIGTLLF), 30–50 (GFFLFTPLFVAMVLGIVFLKV), 61–81 (GGKMISFFLEPATIAFAIPLY), 92–112 (WQILSAIVVGSICSVIVVFIV), 149–169 (ITSFAVIFNAVIVYALGALFL), 177–197 (PIAKGLALGTAGHALGVAVGI), and 209–229 (IAVTVVGVVTVVVIPMFMPFI).

This sequence belongs to the CidB/LrgB family. LrgB subfamily.

It localises to the cell membrane. Inhibits the expression or activity of extracellular murein hydrolases by interacting, possibly with LrgA, with the holin-like protein CidA. The LrgAB and CidA proteins may affect the proton motive force of the membrane. May be involved in programmed cell death (PCD), possibly triggering PCD in response to antibiotics and environmental stresses. This Bacillus cereus (strain Q1) protein is Antiholin-like protein LrgB.